Here is a 1610-residue protein sequence, read N- to C-terminus: Voltage-dependent L-type calcium channel subunit alpha-1D (1610 aa).

Positions 1–99 (MMMMMMKKMQ…SKKQGNSSNS (99 aa)) are disordered. The Cytoplasmic segment spans residues 1 to 125 (MMMMMMKKMQ…RACISIVEWK (125 aa)). The segment covering 37–51 (GPTSQPNSSKQTVLS) has biased composition (polar residues). Over residues 53–66 (QAAIDAARQAKAAQ) the composition is skewed to low complexity. The segment covering 81 to 92 (QRKRQQYAKSKK) has biased composition (basic residues). The I repeat unit spans residues 112 to 408 (NPIRRACISI…LVLGVLSGEF (297 aa)). A helical membrane pass occupies residues 126–144 (PFDIFILLAIFANCVALAI). At 145–162 (YIPFPEDDSNSTNHNLEK) the chain is on the extracellular side. Asparagine 154 carries N-linked (GlcNAc...) asparagine glycosylation. A helical transmembrane segment spans residues 163–182 (VEYAFLIIFTVETFLKIIAY). Topologically, residues 183-194 (GLLLHPNAYVRN) are cytoplasmic. A helical membrane pass occupies residues 195 to 213 (GWNLLDFVIVIVGLFSVIL). Residues 214-234 (EQLTKETEGGNHSSGKSGGFD) lie on the Extracellular side of the membrane. Asparagine 224 carries an N-linked (GlcNAc...) asparagine glycan. Residues 235-253 (VKALRAFRVLRPLRLVSGV) traverse the membrane as a helical segment. At 254–272 (PSLQVVLNSIIKAMVPLLH) the chain is on the cytoplasmic side. A helical transmembrane segment spans residues 273 to 292 (IALLVLFVIIIYAIIGLELF). At 293 to 380 (IGKMHKTCFF…WMNDAMGFEL (88 aa)) the chain is on the extracellular side. A glycan (N-linked (GlcNAc...) asparagine) is linked at asparagine 328. Glutamate 363 contacts Ca(2+). Residues 381-405 (PWVYFVSLVIFGSFFVLNLVLGVLS) form a helical membrane-spanning segment. Topologically, residues 406–522 (GEFSKEREKA…RRCRAAVKSV (117 aa)) are cytoplasmic. The binding to the beta subunit stretch occupies residues 428–445 (EQLEEDLKGYLDWITQAE). The disordered stretch occupies residues 448–487 (DPENEEEGGEEGKRNTSMPTSETESVNTENVSGEGETQGS). The segment covering 462–487 (NTSMPTSETESVNTENVSGEGETQGS) has biased composition (polar residues). Residues 508–754 (NRFNRRRCRA…VFLAIAVDNL (247 aa)) form an II repeat. Residues 523–542 (TFYWLVIVLVFLNTLTISSE) traverse the membrane as a helical segment. The Extracellular portion of the chain corresponds to 543–557 (HYNQPDWLTQIQDIA). The helical transmembrane segment at 558-576 (NKVLLALFTCEMLVKMYSL) threads the bilayer. Topologically, residues 577–584 (GLQAYFVS) are cytoplasmic. Residues 585–603 (LFNRFDCFVVCGGITETIL) form a helical membrane-spanning segment. Topologically, residues 604–613 (VELELMSPLG) are extracellular. The chain crosses the membrane as a helical span at residues 614–632 (VSVFRCVRLLRIFKVTRHW). Over 633–651 (TSLSNLVASLLNSMKSIAS) the chain is Cytoplasmic. The helical transmembrane segment at 652 to 672 (LLLLLFLFIIIFSLLGMQLFG) threads the bilayer. Topologically, residues 673 to 726 (GKFNFDETQTKRSTFDNFPQALLTVFQILTGEDWNAVMYDGIMAYGGPSSSGMI) are extracellular. Glutamate 704 lines the Ca(2+) pocket. A helical transmembrane segment spans residues 727-751 (VCIYFIILFICGNYILLNVFLAIAV). At 752 to 884 (DNLADAESLN…VGCHKLINHH (133 aa)) the chain is on the cytoplasmic side. The segment covering 765 to 789 (KEEAEEKERKKIARKESLENKKNNK) has biased composition (basic and acidic residues). The tract at residues 765-846 (KEEAEEKERK…VPAGPRPRRI (82 aa)) is disordered. Positions 790–801 (PEVNQIANSDNK) are enriched in polar residues. Positions 824–836 (VGEEEEEEEEEPE) are enriched in acidic residues. An III repeat occupies 871–1153 (NPIRVGCHKL…IFVGFVIVTF (283 aa)). The chain crosses the membrane as a helical span at residues 885–903 (IFTNLILVFIMLSSAALAA). The Extracellular portion of the chain corresponds to 904 to 919 (EDPIRSHSFRNTILGY). Residues 920–939 (FDYAFTAIFTVEILLKMTTF) form a helical membrane-spanning segment. Residues 940–951 (GAFLHKGAFCRN) lie on the Cytoplasmic side of the membrane. Residues 952–970 (YFNLLDMLVVGVSLVSFGI) form a helical membrane-spanning segment. Topologically, residues 971–976 (QSSAIS) are extracellular. The chain crosses the membrane as a helical span at residues 977–996 (VVKILRVLRVLRPLRAINRA). Topologically, residues 997 to 1015 (KGLKHVVQCVFVAIRTIGN) are cytoplasmic. A helical membrane pass occupies residues 1016–1035 (IMIVTTLLQFMFACIGVQLF). Topologically, residues 1036–1125 (KGKFYRCTDE…AGPVYNHRVE (90 aa)) are extracellular. The tract at residues 1073–1163 (RIWQNSDFNF…QEQGEKEYKN (91 aa)) is dihydropyridine binding. Glutamate 1099 contributes to the Ca(2+) binding site. Residues 1126 to 1146 (ISIFFIIYIIIVAFFMMNIFV) traverse the membrane as a helical segment. The Cytoplasmic segment spans residues 1147–1203 (GFVIVTFQEQGEKEYKNCELDKNQRQCVEYALKARPLRRYIPKNPYQYKFWYVVNSS). The stretch at 1190–1465 (NPYQYKFWYV…LFVAVIMDNF (276 aa)) is one IV repeat. Residues 1204–1222 (PFEYMMFVLIMLNTLCLAM) traverse the membrane as a helical segment. At 1223 to 1237 (QHYEQSKMFNDAMDI) the chain is on the extracellular side. The helical transmembrane segment at 1238–1257 (LNMVFTGVFTVEMVLKVIAF) threads the bilayer. The Cytoplasmic portion of the chain corresponds to 1258 to 1264 (KPKGYFS). Residues 1265-1286 (DAWNTFDSLIVIGSIIDVALSE) traverse the membrane as a helical segment. Residues 1287–1311 (ADPTESESLPLPTATPGNSEESNRI) are Extracellular-facing. The helical transmembrane segment at 1312–1331 (SITFFRLFRVMRLVKLLSRG) threads the bilayer. Over 1332-1350 (EGIRTLLWTFIKSFQALPY) the chain is Cytoplasmic. A helical membrane pass occupies residues 1351 to 1370 (VALLIAMLFFIYAVIGMQMF). Topologically, residues 1371-1437 (GKVAMRDNNQ…GEEYTCGSNF (67 aa)) are extracellular. Positions 1418 to 1484 (LCDPDSDYNP…LGPHHLDEFK (67 aa)) are dihydropyridine binding. The phenylalkylamine binding stretch occupies residues 1430 to 1473 (EYTCGSNFAIVYFISFYMLCAFLIINLFVAVIMDNFDYLTRDWS). The helical transmembrane segment at 1438–1462 (AIVYFISFYMLCAFLIINLFVAVIM) threads the bilayer. The Cytoplasmic portion of the chain corresponds to 1463-1610 (DNFDYLTRDW…CFLSPSRSRS (148 aa)).

It belongs to the calcium channel alpha-1 subunit (TC 1.A.1.11) family. CACNA1D subfamily. As to quaternary structure, voltage-dependent calcium channels are multisubunit complexes, consisting of alpha-1, alpha-2, beta and delta subunits in a 1:1:1:1 ratio. The channel activity is directed by the pore-forming and voltage-sensitive alpha-1 subunit. In many cases, this subunit is sufficient to generate voltage-sensitive calcium channel activity. The auxiliary subunits beta and alpha-2/delta linked by a disulfide bridge regulate the channel activity. Interacts with RIMBP2. Interacts with CABP1 and CABP4, resulting in a near elimination of calcium-dependent inactivation of the channel. In terms of tissue distribution, expressed in brain, heart and skeletal muscle.

The protein resides in the membrane. It carries out the reaction Ca(2+)(in) = Ca(2+)(out). Its function is as follows. Voltage-sensitive calcium channels (VSCC) mediate the entry of calcium ions into excitable cells and are also involved in a variety of calcium-dependent processes, including muscle contraction, hormone or neurotransmitter release, gene expression, cell motility, cell division and cell death. The isoform alpha-1D gives rise to L-type calcium currents. Long-lasting (L-type) calcium channels belong to the 'high-voltage activated' (HVA) group. They are blocked by dihydropyridines (DHP), phenylalkylamines, and by benzothiazepines. This is Voltage-dependent L-type calcium channel subunit alpha-1D (CACNA1D) from Mesocricetus auratus (Golden hamster).